A 256-amino-acid polypeptide reads, in one-letter code: Hemin import ATP-binding protein HmuV (256 aa).

The ABC transporter domain maps to 2-239 (IHAFAVSVIR…ANVREVYQVD (238 aa)). 34-41 (GPNGAGKS) contributes to the ATP binding site.

The protein belongs to the ABC transporter superfamily. Heme (hemin) importer (TC 3.A.1.14.5) family. As to quaternary structure, the complex is composed of two ATP-binding proteins (HmuV), two transmembrane proteins (HmuU) and a solute-binding protein (HmuT).

It is found in the cell inner membrane. In terms of biological role, part of the ABC transporter complex HmuTUV involved in hemin import. Responsible for energy coupling to the transport system. In Hahella chejuensis (strain KCTC 2396), this protein is Hemin import ATP-binding protein HmuV.